The following is a 1057-amino-acid chain: Probable sucrose-phosphate synthase 1 (1057 aa).

Residues 103–115 show a composition bias toward basic and acidic residues; it reads RRLERERGRREAT. Disordered stretches follow at residues 103–143, 439–459, and 670–693; these read RRLE…STRS, PQDGDMDGETEGNEDNPASPD, and RHPQWQRTDDGGETSESDSPGDSL. The segment covering 442–452 has biased composition (acidic residues); the sequence is GDMDGETEGNE.

The protein belongs to the glycosyltransferase 1 family. Homodimer or homotetramer.

It catalyses the reaction beta-D-fructose 6-phosphate + UDP-alpha-D-glucose = sucrose 6(F)-phosphate + UDP + H(+). Its pathway is glycan biosynthesis; sucrose biosynthesis; sucrose from D-fructose 6-phosphate and UDP-alpha-D-glucose: step 1/2. Activity is regulated by phosphorylation and moderated by concentration of metabolites and light. Its function is as follows. Plays a role in photosynthetic sucrose synthesis by catalyzing the rate-limiting step of sucrose biosynthesis from UDP-glucose and fructose- 6-phosphate. Involved in the regulation of carbon partitioning in the leaves of plants. May regulate the synthesis of sucrose and therefore play a major role as a limiting factor in the export of photoassimilates out of the leaf. Plays a role for sucrose availability that is essential for plant growth and fiber elongation. The protein is Probable sucrose-phosphate synthase 1 (SPS1) of Citrus unshiu (Satsuma mandarin).